We begin with the raw amino-acid sequence, 216 residues long: MTRLVLGSASSGRLKVLQQAGVDPLVVVSGVDEDAIMAGLGPAATPADVVRVLARAKAEQVATTLTGQQASVATDCLVIGCDSMLYIDGRLCGKPETVDDARQLWRSMAGRCGHLYTGHSVVRLTEQRVTHRDDETSTTTVHFATPSDDDLEAYLATGESLKVAGGFTLDGLGGWFITGVEGDPSAVVGIGLPLTRDLISRAGISIAALWASNPLP.

The active-site Proton acceptor is the Asp82.

The protein belongs to the Maf family. Requires a divalent metal cation as cofactor.

It is found in the cytoplasm. It carries out the reaction a ribonucleoside 5'-triphosphate + H2O = a ribonucleoside 5'-phosphate + diphosphate + H(+). The catalysed reaction is a 2'-deoxyribonucleoside 5'-triphosphate + H2O = a 2'-deoxyribonucleoside 5'-phosphate + diphosphate + H(+). Nucleoside triphosphate pyrophosphatase. May have a dual role in cell division arrest and in preventing the incorporation of modified nucleotides into cellular nucleic acids. This Mycobacterium marinum (strain ATCC BAA-535 / M) protein is Nucleoside triphosphate pyrophosphatase.